The chain runs to 476 residues: Eukaryotic translation initiation factor 3 subunit L (476 aa).

Residues 257–452 enclose the PCI domain; sequence DAIRMFSHIL…DLDYALENDL (196 aa).

This sequence belongs to the eIF-3 subunit L family. As to quaternary structure, component of the eukaryotic translation initiation factor 3 (eIF-3) complex.

It is found in the cytoplasm. Its function is as follows. Component of the eukaryotic translation initiation factor 3 (eIF-3) complex, which is involved in protein synthesis of a specialized repertoire of mRNAs and, together with other initiation factors, stimulates binding of mRNA and methionyl-tRNAi to the 40S ribosome. The eIF-3 complex specifically targets and initiates translation of a subset of mRNAs involved in cell proliferation. The chain is Eukaryotic translation initiation factor 3 subunit L from Aspergillus clavatus (strain ATCC 1007 / CBS 513.65 / DSM 816 / NCTC 3887 / NRRL 1 / QM 1276 / 107).